The following is a 240-amino-acid chain: Glyceraldehyde 3-phosphate phosphatase (240 aa).

This sequence belongs to the HAD-like hydrolase superfamily. Requires Mg(2+) as cofactor.

In terms of biological role, catalyzes the dephosphorylation of D,L-glyceraldehyde 3-phosphate in vitro. The chain is Glyceraldehyde 3-phosphate phosphatase from Pyrococcus furiosus (strain ATCC 43587 / DSM 3638 / JCM 8422 / Vc1).